A 56-amino-acid polypeptide reads, in one-letter code: Preprotein translocase subunit SecG (56 aa).

Over 1 to 29 the chain is Cytoplasmic; sequence MAKEKATLPPTGAGLMRFFDEDTKAVKIS. Residues 30-51 traverse the membrane as a helical segment; it reads PRGVIALTLILVALEILLHAFG. Over 52 to 56 the chain is Extracellular; the sequence is PQIFG.

Belongs to the SEC61-beta family. In terms of assembly, component of the protein translocase complex. Heterotrimer consisting of alpha (SecY), beta (SecG) and gamma (SecE) subunits. Can form oligomers of the heterotrimer.

It localises to the cell membrane. Involved in protein export. The function of the beta subunit is unknown, but it may be involved in stabilization of the trimeric complex. This chain is Preprotein translocase subunit SecG, found in Thermococcus onnurineus (strain NA1).